A 222-amino-acid chain; its full sequence is Triosephosphate isomerase (222 aa).

9–11 is a substrate binding site; sequence NLK. The active-site Electrophile is the His93. Glu141 (proton acceptor) is an active-site residue. Residues Ile146, Gly181, and 202-203 each bind substrate; that span reads AS.

This sequence belongs to the triosephosphate isomerase family. As to quaternary structure, homotetramer; dimer of dimers.

It localises to the cytoplasm. The enzyme catalyses D-glyceraldehyde 3-phosphate = dihydroxyacetone phosphate. The protein operates within carbohydrate biosynthesis; gluconeogenesis. It functions in the pathway carbohydrate degradation; glycolysis; D-glyceraldehyde 3-phosphate from glycerone phosphate: step 1/1. In terms of biological role, involved in the gluconeogenesis. Catalyzes stereospecifically the conversion of dihydroxyacetone phosphate (DHAP) to D-glyceraldehyde-3-phosphate (G3P). This chain is Triosephosphate isomerase, found in Methanoculleus marisnigri (strain ATCC 35101 / DSM 1498 / JR1).